The chain runs to 242 residues: 6-carboxyhexanoate--CoA ligase (242 aa).

The protein belongs to the BioW family. In terms of assembly, homodimer. The cofactor is Mg(2+).

It carries out the reaction heptanedioate + ATP + CoA = 6-carboxyhexanoyl-CoA + AMP + diphosphate. It participates in metabolic intermediate metabolism; pimeloyl-CoA biosynthesis; pimeloyl-CoA from pimelate: step 1/1. In terms of biological role, catalyzes the transformation of pimelate into pimeloyl-CoA with concomitant hydrolysis of ATP to AMP. This is 6-carboxyhexanoate--CoA ligase from Veillonella parvula (strain ATCC 10790 / DSM 2008 / CCUG 5123 / JCM 12972 / NCTC 11810 / Te3) (Veillonella alcalescens).